The following is a 379-amino-acid chain: Chaperone protein DnaJ (379 aa).

The 66-residue stretch at 5–70 (DYYEILGVPK…QKRAAYDQYG (66 aa)) folds into the J domain. The segment at 134 to 212 (GVTKEIRIPT…CHGHGRIEKT (79 aa)) adopts a CR-type zinc-finger fold. Zn(2+) is bound by residues Cys-147, Cys-150, Cys-164, Cys-167, Cys-186, Cys-189, Cys-200, and Cys-203. 4 CXXCXGXG motif repeats span residues 147–154 (CEVCHGSG), 164–171 (CPTCHGAG), 186–193 (CPHCQGRG), and 200–207 (CNSCHGHG).

Belongs to the DnaJ family. Homodimer. Zn(2+) is required as a cofactor.

Its subcellular location is the cytoplasm. Functionally, participates actively in the response to hyperosmotic and heat shock by preventing the aggregation of stress-denatured proteins and by disaggregating proteins, also in an autonomous, DnaK-independent fashion. Unfolded proteins bind initially to DnaJ; upon interaction with the DnaJ-bound protein, DnaK hydrolyzes its bound ATP, resulting in the formation of a stable complex. GrpE releases ADP from DnaK; ATP binding to DnaK triggers the release of the substrate protein, thus completing the reaction cycle. Several rounds of ATP-dependent interactions between DnaJ, DnaK and GrpE are required for fully efficient folding. Also involved, together with DnaK and GrpE, in the DNA replication of plasmids through activation of initiation proteins. The protein is Chaperone protein DnaJ of Cronobacter sakazakii (strain ATCC BAA-894) (Enterobacter sakazakii).